The chain runs to 387 residues: MKAITLLGSTGSIGTQTLDIVAQYPDQFRIVGLAAGRSLDKLIPQIRQFRPQIVALADEQQLDDLKAAIADLDPQPILVAGPAGVCEVAAYGDAKTVVTGIVGCAGLLPTIAAIKAGKDIALANKETLIAGGPVVLPLVEQYGVKLLPADSEHSAIFQCLQGVPAGGLRRILLTASGGAFRDWPVDKLGQVTIADALKHPNWSMGQKITVDSATLMNKGLEVIEAHYLFGLDYDHIEIIIHPQSIIHSLIEVQDTSVLAQLGWPDMRLPVLYAMSWPERIATDWPRLDLLKAGDLTFKEPDHAKYPCMKLAYAVGRAGGAMPAVLNAANEQAVALFLAERIAFLDIPRLIEQTCDRFSSKNCAEPSLEDILAADQWARQEVLLASQN.

NADPH-binding residues include threonine 10, glycine 11, serine 12, isoleucine 13, glycine 36, arginine 37, and asparagine 124. 1-deoxy-D-xylulose 5-phosphate is bound at residue lysine 125. Glutamate 126 provides a ligand contact to NADPH. Aspartate 150 serves as a coordination point for Mn(2+). Serine 151, glutamate 152, serine 176, and histidine 199 together coordinate 1-deoxy-D-xylulose 5-phosphate. Glutamate 152 contributes to the Mn(2+) binding site. Glycine 205 contacts NADPH. Residues serine 212, asparagine 217, lysine 218, and glutamate 221 each contribute to the 1-deoxy-D-xylulose 5-phosphate site. Residue glutamate 221 coordinates Mn(2+).

This sequence belongs to the DXR family. The cofactor is Mg(2+). Mn(2+) is required as a cofactor.

It catalyses the reaction 2-C-methyl-D-erythritol 4-phosphate + NADP(+) = 1-deoxy-D-xylulose 5-phosphate + NADPH + H(+). It participates in isoprenoid biosynthesis; isopentenyl diphosphate biosynthesis via DXP pathway; isopentenyl diphosphate from 1-deoxy-D-xylulose 5-phosphate: step 1/6. Catalyzes the NADPH-dependent rearrangement and reduction of 1-deoxy-D-xylulose-5-phosphate (DXP) to 2-C-methyl-D-erythritol 4-phosphate (MEP). The chain is 1-deoxy-D-xylulose 5-phosphate reductoisomerase from Cyanothece sp. (strain PCC 7425 / ATCC 29141).